The chain runs to 162 residues: UPF0305 protein MmarC5_0909 (162 aa).

This sequence belongs to the UPF0305 family.

The chain is UPF0305 protein MmarC5_0909 from Methanococcus maripaludis (strain C5 / ATCC BAA-1333).